A 445-amino-acid chain; its full sequence is tRNA-2-methylthio-N(6)-dimethylallyladenosine synthase (445 aa).

The MTTase N-terminal domain occupies 3 to 124; it reads KKLYIKTYGC…LPELISKVVR (122 aa). 6 residues coordinate [4Fe-4S] cluster: Cys-12, Cys-48, Cys-87, Cys-162, Cys-166, and Cys-169. The Radical SAM core domain maps to 148–380; it reads YPQGTSAFIS…QQELMAQQLA (233 aa). One can recognise a TRAM domain in the interval 383 to 445; the sequence is TSCVGSTMKV…SLNSLTGEIL (63 aa).

The protein belongs to the methylthiotransferase family. MiaB subfamily. Monomer. Requires [4Fe-4S] cluster as cofactor.

Its subcellular location is the cytoplasm. It catalyses the reaction N(6)-dimethylallyladenosine(37) in tRNA + (sulfur carrier)-SH + AH2 + 2 S-adenosyl-L-methionine = 2-methylsulfanyl-N(6)-dimethylallyladenosine(37) in tRNA + (sulfur carrier)-H + 5'-deoxyadenosine + L-methionine + A + S-adenosyl-L-homocysteine + 2 H(+). Its function is as follows. Catalyzes the methylthiolation of N6-(dimethylallyl)adenosine (i(6)A), leading to the formation of 2-methylthio-N6-(dimethylallyl)adenosine (ms(2)i(6)A) at position 37 in tRNAs that read codons beginning with uridine. This is tRNA-2-methylthio-N(6)-dimethylallyladenosine synthase from Rickettsia rickettsii (strain Iowa).